Here is a 179-residue protein sequence, read N- to C-terminus: uncharacterized protein (179 aa).

Disordered regions lie at residues 26–103 and 136–179; these read LSAV…SYED and KHKA…SWFN. The segment covering 34 to 61 has biased composition (basic and acidic residues); it reads QQGKNEEQRQHDEWVAERNREIQQEKQR. The span at 63–79 shows a compositional bias: low complexity; sequence ANAQAAANKRAATAAAN. Composition is skewed to basic and acidic residues over residues 82 to 103 and 158 to 179; these read ARQD…SYED and GGRD…SWFN.

This is an uncharacterized protein from Escherichia coli (strain K12).